A 968-amino-acid polypeptide reads, in one-letter code: Protein translocase subunit SecA 1 (968 aa).

Residues Gln86, 104 to 108, and Asp493 contribute to the ATP site; that span reads GEGKT. 2 stretches are compositionally biased toward basic and acidic residues: residues 858-868 and 883-898; these read EAEKTEDKAED and ESAK…ESVA. Positions 858-968 are disordered; sequence EAEKTEDKAE…KCHGAPKSRV (111 aa). Residues Cys949, Cys951, Cys960, and His961 each contribute to the Zn(2+) site. Basic residues predominate over residues 955–968; that stretch reads KKYKKCHGAPKSRV.

This sequence belongs to the SecA family. As to quaternary structure, monomer and homodimer. Part of the essential Sec protein translocation apparatus which comprises SecA, SecYEG and auxiliary proteins SecDF. Other proteins may also be involved. It depends on Zn(2+) as a cofactor.

The protein resides in the cell membrane. The protein localises to the cytoplasm. The catalysed reaction is ATP + H2O + cellular proteinSide 1 = ADP + phosphate + cellular proteinSide 2.. In terms of biological role, part of the Sec protein translocase complex. Interacts with the SecYEG preprotein conducting channel. Has a central role in coupling the hydrolysis of ATP to the transfer of proteins into and across the cell membrane, serving as an ATP-driven molecular motor driving the stepwise translocation of polypeptide chains across the membrane. This Thermobifida fusca (strain YX) protein is Protein translocase subunit SecA 1.